The chain runs to 337 residues: Ornithine carbamoyltransferase (337 aa).

Residues 57–60 (STRT), Gln-84, Arg-108, and 135–138 (HPTQ) each bind carbamoyl phosphate. L-ornithine-binding positions include Asn-167, Asp-231, and 235–236 (SM). Residues 272–273 (CL) and Arg-317 contribute to the carbamoyl phosphate site.

Belongs to the aspartate/ornithine carbamoyltransferase superfamily. OTCase family.

It is found in the cytoplasm. It catalyses the reaction carbamoyl phosphate + L-ornithine = L-citrulline + phosphate + H(+). It participates in amino-acid degradation; L-arginine degradation via ADI pathway; carbamoyl phosphate from L-arginine: step 2/2. In terms of biological role, reversibly catalyzes the transfer of the carbamoyl group from carbamoyl phosphate (CP) to the N(epsilon) atom of ornithine (ORN) to produce L-citrulline. This is Ornithine carbamoyltransferase from Streptococcus equi subsp. equi (strain 4047).